The primary structure comprises 174 residues: MNYFELFNLPVAFDVNTSELADKYRELQRTVHPDKFAAASEQEKLLAVSRTAMVNDGFQTLKDPIRRAEHMLALKGVDIRHETQTVRDTAFLMQQMEWREALEEITHADDPHCLIADLYQSFGDFQKQVTAKLKTLLVSEDDNDLQAAADQVRKLKFMAKLHVELERAEDALLD.

In terms of domain architecture, J spans 2–74; the sequence is NYFELFNLPV…IRRAEHMLAL (73 aa).

This sequence belongs to the HscB family. Interacts with HscA and stimulates its ATPase activity.

Functionally, co-chaperone involved in the maturation of iron-sulfur cluster-containing proteins. Seems to help targeting proteins to be folded toward HscA. The protein is Co-chaperone protein HscB homolog of Shewanella amazonensis (strain ATCC BAA-1098 / SB2B).